We begin with the raw amino-acid sequence, 185 residues long: CASP-like protein 2D1 (185 aa).

Residues 1-15 (MRTHIDDSASGKNHH) lie on the Cytoplasmic side of the membrane. Residues 16–36 (LPMLWFFDSSLRLCAIPLSVA) traverse the membrane as a helical segment. Residues 37-64 (TMWITVTNKEDNSSYGMLKYNNLSALKY) lie on the Extracellular side of the membrane. Residues asparagine 48 and asparagine 58 are each glycosylated (N-linked (GlcNAc...) asparagine). The chain crosses the membrane as a helical span at residues 65-85 (MVLVSALCACYALLAAACSLV). Topologically, residues 86–92 (RCFVSKA) are cytoplasmic. A helical transmembrane segment spans residues 93 to 113 (WIFFVSDQIVAYLAITSVAAV). The Extracellular portion of the chain corresponds to 114–145 (MEMYYLAYNGAKEDSWSEACSSYGSFCSKVKL). A helical membrane pass occupies residues 146–166 (ALILHTITFCCFFVIAVISAF). Residues 167-185 (RAFSVFDPPFVNSQEVQGD) lie on the Cytoplasmic side of the membrane.

It belongs to the Casparian strip membrane proteins (CASP) family. Homodimer and heterodimers.

It localises to the cell membrane. The polypeptide is CASP-like protein 2D1 (Glycine max (Soybean)).